A 434-amino-acid chain; its full sequence is Bcl-2-like protein 13 (434 aa).

The short motif at 14 to 30 is the BH4 element; the sequence is ETKYVVLSYLGLLSQEK. The residue at position 35 (Ser35) is a Phosphoserine. A BH3 motif is present at residues 97-113; the sequence is IEDCLAHLGERVSQDLK. The short motif at 144–154 is the BH1 element; that stretch reads ASGWNKLLVPL. The BH2 motif lies at 190–203; sequence FIIQQGGWGSVFSL. Residues 224–245 are disordered; it reads LPSDNSGQVSPPESPTVTTSWQ. Polar residues predominate over residues 226-245; that stretch reads SDNSGQVSPPESPTVTTSWQ. An A repeat occupies 243–253; that stretch reads SWQSESLPVSL. Ser256, Ser258, Ser300, Ser343, Ser347, Ser377, and Ser387 each carry phosphoserine. The A; approximate repeat unit spans residues 258–268; the sequence is SWHTESLPVSL. Residues 282 to 303 form a disordered region; that stretch reads EVKSLDSSGAGEKSENNSSNSD. A disordered region spans residues 363–398; sequence RPEAVERAEGAAQLSEERAGSRKKSHTGEAAAVRGA. The segment covering 365 to 382 has biased composition (basic and acidic residues); the sequence is EAVERAEGAAQLSEERAG. A helical membrane pass occupies residues 409 to 429; that stretch reads VLLFGGAAAVAILAVAVGVAL.

The protein belongs to the Bcl-2 family. As to quaternary structure, monomer.

It is found in the mitochondrion membrane. Its function is as follows. May promote the activation of caspase-3 and apoptosis. The polypeptide is Bcl-2-like protein 13 (Bcl2l13) (Mus musculus (Mouse)).